The chain runs to 307 residues: Probable protein S-acyltransferase 14 (307 aa).

2 consecutive transmembrane segments (helical) span residues 22–42 (LGSIMILLVLGVVGVTYYAVV) and 63–83 (ILILFHFLLAMLLWSYFSVVF). In terms of domain architecture, DHHC spans 127 to 177 (RFCRKCNQLKPSRCHHCSVCGRCVLKMDHHCVWVVNCVGALNYKYFLLFLF). The active-site S-palmitoyl cysteine intermediate is the Cys-157. 2 helical membrane passes run 171–191 (YFLLFLFYTFLETTLVTLVLM) and 213–233 (TFLAFVLNLAFALSVMGFLIM).

The protein belongs to the DHHC palmitoyltransferase family.

Its subcellular location is the golgi apparatus. The protein resides in the trans-Golgi network membrane. It carries out the reaction L-cysteinyl-[protein] + hexadecanoyl-CoA = S-hexadecanoyl-L-cysteinyl-[protein] + CoA. Functionally, palmitoyl acyltransferase. The sequence is that of Probable protein S-acyltransferase 14 (PAT14) from Arabidopsis thaliana (Mouse-ear cress).